Reading from the N-terminus, the 970-residue chain is Polycystin-2 (970 aa).

The span at methionine 1–glutamine 11 shows a compositional bias: polar residues. The tract at residues methionine 1 to leucine 182 is disordered. The Cytoplasmic segment spans residues methionine 1 to serine 221. Residues glycine 25–glycine 45 are compositionally biased toward low complexity. Over residues arginine 47–arginine 60 the composition is skewed to basic and acidic residues. The segment covering alanine 62–serine 83 has biased composition (low complexity). A phosphoserine mark is found at serine 76 and serine 80. Acidic residues predominate over residues glutamate 95 to glutamate 109. The span at arginine 125–alanine 138 shows a compositional bias: low complexity. The residue at position 139 (arginine 139) is an Omega-N-methylarginine. The segment covering arginine 139–glycine 148 has biased composition (gly residues). The chain crosses the membrane as a helical span at residues valine 222 to methionine 243. Residues methionine 244–threonine 470 are Extracellular-facing. N-linked (GlcNAc...) asparagine glycosylation is found at asparagine 301, asparagine 307, and asparagine 330. A disulfide bridge connects residues cysteine 333 and cysteine 346. N-linked (GlcNAc...) asparagine glycosylation is found at asparagine 364 and asparagine 377. The helical transmembrane segment at phenylalanine 471–valine 491 threads the bilayer. The Cytoplasmic portion of the chain corresponds to glutamate 492–serine 507. A helical transmembrane segment spans residues phenylalanine 508–isoleucine 528. Over tyrosine 529–alanine 554 the chain is Extracellular. The helical transmembrane segment at tyrosine 555–leucine 575 threads the bilayer. Glutamine 559 is a cholesterol binding site. At phenylalanine 576–leucine 599 the chain is on the cytoplasmic side. Residues phenylalanine 600–phenylalanine 621 traverse the membrane as a helical segment. The Extracellular segment spans residues glycine 622–glutamate 633. Residues cysteine 634–phenylalanine 648 constitute an intramembrane region (pore-forming). Residue leucine 643 coordinates Ca(2+). Residues leucine 643–aspartate 645 carry the Selectivity filter motif. The Extracellular segment spans residues alanine 649–arginine 656. The helical transmembrane segment at valine 657–methionine 677 threads the bilayer. The Cytoplasmic segment spans residues phenylalanine 678 to valine 970. Residues lysine 750–glutamate 785 enclose the EF-hand domain. 5 residues coordinate Ca(2+): aspartate 765, aspartate 767, aspartate 769, glutamate 771, and glutamate 776. The disordered stretch occupies residues glutamine 766–serine 833. Residues leucine 772 to serine 797 show a composition bias toward basic and acidic residues. A compositionally biased stretch (low complexity) spans leucine 798–arginine 809. Serine 803, serine 810, serine 814, and serine 831 each carry phosphoserine. The tract at residues arginine 805–histidine 824 is linker. The segment at aspartate 812–glycine 823 is important for interaction with PACS1 and PACS2. The stretch at glycine 835–arginine 874 forms a coiled coil. The segment at aspartate 921 to valine 970 is disordered. The span at glutamine 940–glycine 956 shows a compositional bias: low complexity.

The protein belongs to the polycystin family. Homotetramer. Component of the heterotetrameric polycystin channel complex with PKD1; the tetramer contains one PKD1 chain and three PKD2 chains. Isoform 1 interacts with PKD1 while isoform 3 does not. Interacts with PKD1L1; probably forms a Ca(2+) channel. Interacts with CD2AP. Interacts with HAX1. Interacts with NEK8. Part of a complex containing AKAP5, ADCY5, ADCY6 and PDE4C. Interacts (via C-terminus) with TRPV4 (via C-terminus). Interacts (via C-terminal acidic region) with PACS1 and PACS2; these interactions retain the protein in the endoplasmic reticulum and prevent trafficking to the cell membrane. Interacts with TMEM33. Form a heterotetramer with TRPC1 with a 2:2 stoichiometry; has distinct channel properties separate from PKD2 or TRPC1 homomers alone. Interacts with TMEM120A; TMEM120A inhibits PKD2 channel activity through the physical association of PKD2 with TMEM120A. Interacts (via N-terminus) with RYR2; regulates RYR2 channel activity. Post-translationally, N-glycosylated. The four subunits in a tetramer probably differ in the extent of glycosylation; simultaneous glycosylation of all experimentally validated sites would probably create steric hindrance. In terms of processing, phosphorylated. Phosphorylation is important for protein function; a mutant that lacks the N-terminal phosphorylation sites cannot complement a zebrafish pkd2-deficient mutant. PKD-mediated phosphorylation at the C-terminus regulates its function in the release of Ca(2+) stores from the endoplasmic reticulum. Phosphorylation at Ser-814 regulates PKD2 trafficking. Phosphorylation at Ser-76 is required for PKD2 trafficking to or retention at the lateral plasma membrane. Phosphorylation at Ser-803, Ser-814 and Ser-831 regulates PKD2 channel activity. Sumoylated by SUMO1; sumoylation regulates PKD2 membrane recycling and is necessary for intravascular pressure-induced arterial contractility. As to expression, expressed in mesenchymally derived structures in the developing embryo at day 12.5. In adult, mostly expressed in kidney.

It localises to the cell projection. It is found in the cilium membrane. The protein resides in the endoplasmic reticulum membrane. The protein localises to the cell membrane. Its subcellular location is the basolateral cell membrane. It localises to the cytoplasmic vesicle membrane. It is found in the golgi apparatus. The protein resides in the vesicle. The protein localises to the secreted. Its subcellular location is the extracellular exosome. It catalyses the reaction K(+)(in) = K(+)(out). It carries out the reaction Na(+)(in) = Na(+)(out). The catalysed reaction is Ca(2+)(in) = Ca(2+)(out). Its activity is regulated as follows. Channel activity is regulated by phosphorylation. Channel activity is regulated by intracellular Ca(2+). At the endoplasmic reticulum membrane (ER), TMEM33 enhances its channel activity. TMEM120A inhibits the channel activity of PKD2, and mediates mechanosensitivity of the PKD2-TMEM120A channel complex. PKD1/PKD2 complex on the plasma membrane is activated by PKD1 N-terminus. Forms a nonselective cation channel. Can function as a homotetrameric ion channel or can form heteromer with PKD1. Displays distinct function depending on its subcellular localization and regulation by its binding partners. Functions as a cation channel, with a preference for monovalent cations over divalent cations that allows K(+), Na(+) and Ca(2+) influx, with low selectivity for Ca(2+). Involved in fluid-flow mechanosensation in the primary cilium in renal epithelium. In the endoplasmic reticulum, likely functions as a K(+) channel to facilitate Ca(2+) release. The heterotetrameric PKD1/PKD2 channel has higher Ca(2+) permeability than homomeric PKD2 channel and acts as a primarily Ca(2+)-permeable channel. Interacts with and acts as a regulator of a number of other channels, such as TRPV4, TRPC1, IP3R, RYR2, ultimately further affecting intracellular signaling, to modulate intracellular Ca(2+) signaling. Together with TRPV4, forms mechano- and thermosensitive channels in cilium. In cardiomyocytes, PKD2 modulates Ca(2+) release from stimulated RYR2 receptors through direct association. Also involved in left-right axis specification via its role in sensing nodal flow; forms a complex with PKD1L1 in cilia to facilitate flow detection in left-right patterning. Acts as a regulator of cilium length together with PKD1. Mediates systemic blood pressure and contributes to the myogenic response in cerebral arteries though vasoconstriction. The protein is Polycystin-2 of Bos taurus (Bovine).